A 268-amino-acid polypeptide reads, in one-letter code: MERYESLFAQLKERKEGAFVPFVTLGDPGIEQSLKIIDTLIEAGADALELGIPFSDPLADGPTIQNATLRAFAAGVTPAQCFEMLALIRQKHPTIPIGLLMYANLVFNKGIDEFYAQCEKVGVDSVLVADVPIEESAPFRQAALRHNVAPIFICPPNADDDLLRQIASYGRGYTYLLSRAGVTGAENRAALPLNHLVAKLKEYNAAPPLQGFGISAPDQVKAPIDAGAAGAISGSAIVKIIEQHINEPEKMLAALKVFVQPMKAATRS.

Active-site proton acceptor residues include glutamate 49 and aspartate 60.

This sequence belongs to the TrpA family. As to quaternary structure, tetramer of two alpha and two beta chains.

The enzyme catalyses (1S,2R)-1-C-(indol-3-yl)glycerol 3-phosphate + L-serine = D-glyceraldehyde 3-phosphate + L-tryptophan + H2O. Its pathway is amino-acid biosynthesis; L-tryptophan biosynthesis; L-tryptophan from chorismate: step 5/5. Functionally, the alpha subunit is responsible for the aldol cleavage of indoleglycerol phosphate to indole and glyceraldehyde 3-phosphate. In Escherichia coli O139:H28 (strain E24377A / ETEC), this protein is Tryptophan synthase alpha chain.